The following is a 644-amino-acid chain: G-protein coupled receptor-associated protein LMBRD2 (644 aa).

Topologically, residues methionine 1–valine 4 are extracellular. The chain crosses the membrane as a helical span at residues serine 5–isoleucine 27. Residues arginine 28–asparagine 31 lie on the Cytoplasmic side of the membrane. Residues proline 32–leucine 52 traverse the membrane as a helical segment. The Extracellular portion of the chain corresponds to proline 53–arginine 102. An N-linked (GlcNAc...) asparagine glycan is attached at asparagine 73. Residues valine 103 to valine 123 form a helical membrane-spanning segment. Residues threonine 124–tyrosine 145 are Cytoplasmic-facing. The chain crosses the membrane as a helical span at residues alanine 146–isoleucine 166. Residues asparagine 167–lysine 172 are Extracellular-facing. A helical transmembrane segment spans residues valine 173–histidine 193. Residues glycine 194–leucine 369 are Cytoplasmic-facing. Positions tyrosine 216–asparagine 245 form a coiled coil. The helical transmembrane segment at glycine 370–valine 390 threads the bilayer. The Extracellular portion of the chain corresponds to serine 391–tyrosine 412. Residues threonine 413–phenylalanine 433 traverse the membrane as a helical segment. Over arginine 434–serine 453 the chain is Cytoplasmic. A helical transmembrane segment spans residues isoleucine 454 to glycine 474. Over methionine 475–aspartate 502 the chain is Extracellular. Residues valine 503–cysteine 523 traverse the membrane as a helical segment. Over alanine 524–methionine 644 the chain is Cytoplasmic. The span at serine 567–glutamine 576 shows a compositional bias: basic and acidic residues. Residues serine 567–methionine 644 form a disordered region. Residues asparagine 578–asparagine 594 show a composition bias toward low complexity. Residues valine 621–methionine 644 show a composition bias toward polar residues.

Belongs to the LIMR family.

The protein resides in the cell membrane. Functionally, may associate with G-protein coupled receptors and regulate downstream signaling pathways. This Caenorhabditis briggsae protein is G-protein coupled receptor-associated protein LMBRD2.